Here is a 327-residue protein sequence, read N- to C-terminus: uncharacterized protein (327 aa).

The helical transmembrane segment at 12 to 32 (LVVVVVAIAIFTLVLLMLWEG) threads the bilayer. A disordered region spans residues 149 to 170 (AFSAVETSEGSDQESEGADEQG). The span at 157 to 167 (EGSDQESEGAD) shows a compositional bias: acidic residues. Residues 162–227 (ESEGADEQGK…LDEENREVAE (66 aa)) adopt a coiled-coil conformation.

It localises to the membrane. This is an uncharacterized protein from Encephalitozoon cuniculi (strain GB-M1) (Microsporidian parasite).